A 731-amino-acid polypeptide reads, in one-letter code: MAAPDGRVVSRPQRLGQGSGQGPKGSGACLHPLDSLEQKETQEQTSGQLVMLRKAQEFFQTCDAEGKGFIARKDMQRLHKELPLSLEELEDVFDALDADGNGYLTPQEFTTGFSHFFFSQNNPSQEDAGEQVAQRHEEKVYLSRGDEDLGDMGEDEEAQFRMLMDRLGAQKVLEDESDVKQLWLQLKKEEPHLLSNFEDFLTRIISQLQEAHEEKNELECALKRKIAAYDEEIQHLYEEMEQQIKSEKEQFLLKDTERFQARSQELEQKLLCKEQELEQLTQKQKRLEGQCTALHHDKHETKAENTKLKLTNQELARELERTSWELQDAQQQLESLQQEACKLHQEKEMEVYRVTESLQREKAGLLKQLDFLRERNKHLRDERDICFQKNKAAKANTAASRASWKKRSGSVIGKYVDSRGILRSQSEEEEEVFGIPRRSSLGLSGYPLTEEEPGTGEPGPGGPYPRPLRRIISVEEDPLPQLLDGGFEQPLSKCSEEEEVSDQGVQGQIPEAPPLKLTPTSPRGQPVGKEALCKEESSPSAPDRLFKIVFVGNSAVGKTSFLRRFCEDRFSPGMAATVGIDYRVKTLNVDNSQVALQLWDTAGQERYRCITQQFFRKADGVIVMYDLTDKQSFLSVRRWLSSVEEAVGDRVPVLLLGNKLDNEKEREVPRGLGEQLATENNLIFYECSAYSGHNTKESLLHLARFLKEQEDTVREDTIQVGHPAKKKSCCG.

Positions 1–45 (MAAPDGRVVSRPQRLGQGSGQGPKGSGACLHPLDSLEQKETQEQT) are disordered. The region spanning 84 to 119 (LSLEELEDVFDALDADGNGYLTPQEFTTGFSHFFFS) is the EF-hand domain. Positions 97, 99, 101, 103, and 108 each coordinate Ca(2+). Residues 201-382 (LTRIISQLQE…RERNKHLRDE (182 aa)) are a coiled coil. The interval 349-540 (MEVYRVTESL…ALCKEESSPS (192 aa)) is proline-rich domain (PRD) which mediates interaction with VAV1. 2 disordered regions span residues 426 to 466 (SEEE…PYPR) and 494 to 528 (CSEE…QPVG). Residues Ser-554, Val-556, Gly-557, Lys-558, Thr-559, Ser-560, Ser-571, Pro-572, and Thr-577 each coordinate GTP. Position 559 (Thr-559) interacts with Mg(2+). Residues 572–580 (PGMAATVGI) are switch-I. Mg(2+)-binding residues include Thr-577 and Asp-600. The GTP site is built by Gly-603, Asn-658, Lys-659, Asp-661, and Ala-689. A switch-II region spans residues 603–619 (GQERYRCITQQFFRKAD). Cys-729 carries S-geranylgeranyl cysteine lipidation.

Belongs to the EFCAB4 family. As to quaternary structure, interacts with ORAI1 and STIM1; the interaction is direct and takes place in absence of Ca(2+). Forms a complex with ORAI1 and STIM1 at low concentration of Ca(2+), the complex dissociates at elevated Ca(2+) concentrations. Interacts with ORAI2 and ORAI3. Interacts with DYNC1H1. Interacts with the dynein-dynactin complex in a Ca(2+)-dependent manner. Interacts with VAV1. The cofactor is Mg(2+). As to expression, expressed in the Jurkat T-cell line. Expressed in endothelial cells. Expressed in Weibel-Palade bodies (which are P-selectin/SELP negative) in endothelial cells. Expressed in the Jurkat T-cell line.

The protein localises to the cytoplasm. It is found in the cytoskeleton. It localises to the microtubule organizing center. The protein resides in the cell membrane. Its subcellular location is the golgi apparatus membrane. The protein localises to the golgi apparatus. It is found in the trans-Golgi network membrane. It localises to the vesicle. The enzyme catalyses GTP + H2O = GDP + phosphate + H(+). In terms of biological role, ca(2+)-binding protein that plays a key role in store-operated Ca(2+) entry (SOCE) in T-cells by regulating CRAC channel activation. Acts as a cytoplasmic calcium-sensor that facilitates the clustering of ORAI1 and STIM1 at the junctional regions between the plasma membrane and the endoplasmic reticulum upon low Ca(2+) concentration. It thereby regulates CRAC channel activation, including translocation and clustering of ORAI1 and STIM1. Upon increase of cytoplasmic Ca(2+) resulting from opening of CRAC channels, dissociates from ORAI1 and STIM1, thereby destabilizing the ORAI1-STIM1 complex. Rab GTPase that mediates the trafficking of Weibel-Palade bodies (WPBs) to microtubule organizing center (MTOC) in endothelial cells in response to acute inflammatory stimuli. During histamine (but not thrombin) stimulation of endothelial cells, the dynein-bound form induces retrograde transport of a subset of WPBs along microtubules to the MTOC in a Ca(2+)-independent manner and its GTPase activity is essential for this function. Ca(2+)-regulated dynein adapter protein that activates dynein-mediated transport and dynein-dynactin motility on microtubules and regulates endosomal trafficking of CD47. Acts as an intracellular signaling module bridging two important T-cell receptor (TCR) signaling pathways, Ca(2+)-NFAT and JNK, to affect T-cell activation. In resting T-cells, is predominantly localized near TGN network in a GTP-bound form, upon TCR stimulation, localizes at the immunological synapse via interaction with VAV1 to activate downstream Ca(2+)-NFAT and JNK signaling pathways. Plays a role in T-helper 1 (Th1) cell differentiation and T-helper 17 (Th17) cell effector function. Plays a role in store-operated Ca(2+) entry (SOCE) in T-cells by regulating CRAC channel activation. The sequence is that of EF-hand calcium-binding domain-containing protein 4B from Homo sapiens (Human).